Consider the following 102-residue polypeptide: Small ribosomal subunit protein uS10 (102 aa).

This sequence belongs to the universal ribosomal protein uS10 family. In terms of assembly, part of the 30S ribosomal subunit.

Functionally, involved in the binding of tRNA to the ribosomes. The protein is Small ribosomal subunit protein uS10 of Enterococcus faecalis (strain ATCC 700802 / V583).